Reading from the N-terminus, the 228-residue chain is Ribosomal RNA small subunit methyltransferase G (228 aa).

Residues Gly70, 121-122 (AE), and Arg138 each bind S-adenosyl-L-methionine.

Belongs to the methyltransferase superfamily. RNA methyltransferase RsmG family.

It is found in the cytoplasm. Specifically methylates the N7 position of a guanine in 16S rRNA. The chain is Ribosomal RNA small subunit methyltransferase G from Thermotoga petrophila (strain ATCC BAA-488 / DSM 13995 / JCM 10881 / RKU-1).